Here is a 171-residue protein sequence, read N- to C-terminus: 3-hydroxydecanoyl-[acyl-carrier-protein] dehydratase (171 aa).

H70 is an active-site residue.

Belongs to the thioester dehydratase family. FabA subfamily. As to quaternary structure, homodimer.

It localises to the cytoplasm. The enzyme catalyses a (3R)-hydroxyacyl-[ACP] = a (2E)-enoyl-[ACP] + H2O. It carries out the reaction (3R)-hydroxydecanoyl-[ACP] = (2E)-decenoyl-[ACP] + H2O. It catalyses the reaction (2E)-decenoyl-[ACP] = (3Z)-decenoyl-[ACP]. It participates in lipid metabolism; fatty acid biosynthesis. Functionally, necessary for the introduction of cis unsaturation into fatty acids. Catalyzes the dehydration of (3R)-3-hydroxydecanoyl-ACP to E-(2)-decenoyl-ACP and then its isomerization to Z-(3)-decenoyl-ACP. Can catalyze the dehydratase reaction for beta-hydroxyacyl-ACPs with saturated chain lengths up to 16:0, being most active on intermediate chain length. This is 3-hydroxydecanoyl-[acyl-carrier-protein] dehydratase from Pseudomonas fluorescens (strain SBW25).